Consider the following 51-residue polypeptide: Large ribosomal subunit protein eL39x (51 aa).

This sequence belongs to the eukaryotic ribosomal protein eL39 family.

This Oryza sativa subsp. japonica (Rice) protein is Large ribosomal subunit protein eL39x (RPL39C).